The chain runs to 82 residues: ATP synthase subunit c, chloroplastic (82 aa).

2 helical membrane-spanning segments follow: residues 3 to 23 and 57 to 77; these read PLIS…ASIG and FAFM…LLFA.

Belongs to the ATPase C chain family. As to quaternary structure, F-type ATPases have 2 components, F(1) - the catalytic core - and F(0) - the membrane proton channel. F(1) has five subunits: alpha(3), beta(3), gamma(1), delta(1), epsilon(1). F(0) has four main subunits: a(1), b(1), b'(1) and c(10-14). The alpha and beta chains form an alternating ring which encloses part of the gamma chain. F(1) is attached to F(0) by a central stalk formed by the gamma and epsilon chains, while a peripheral stalk is formed by the delta, b and b' chains.

The protein resides in the plastid. It is found in the chloroplast thylakoid membrane. In terms of biological role, f(1)F(0) ATP synthase produces ATP from ADP in the presence of a proton or sodium gradient. F-type ATPases consist of two structural domains, F(1) containing the extramembraneous catalytic core and F(0) containing the membrane proton channel, linked together by a central stalk and a peripheral stalk. During catalysis, ATP synthesis in the catalytic domain of F(1) is coupled via a rotary mechanism of the central stalk subunits to proton translocation. Functionally, key component of the F(0) channel; it plays a direct role in translocation across the membrane. A homomeric c-ring of between 10-14 subunits forms the central stalk rotor element with the F(1) delta and epsilon subunits. The chain is ATP synthase subunit c, chloroplastic from Mesostigma viride (Green alga).